We begin with the raw amino-acid sequence, 422 residues long: Serine--tRNA ligase (422 aa).

229 to 231 (TAE) provides a ligand contact to L-serine. ATP is bound at residue 260 to 262 (RKE). Glu-283 lines the L-serine pocket. 347-350 (EISS) provides a ligand contact to ATP. Residue Ser-383 coordinates L-serine.

It belongs to the class-II aminoacyl-tRNA synthetase family. Type-1 seryl-tRNA synthetase subfamily. As to quaternary structure, homodimer. The tRNA molecule binds across the dimer.

Its subcellular location is the cytoplasm. It carries out the reaction tRNA(Ser) + L-serine + ATP = L-seryl-tRNA(Ser) + AMP + diphosphate + H(+). The enzyme catalyses tRNA(Sec) + L-serine + ATP = L-seryl-tRNA(Sec) + AMP + diphosphate + H(+). The protein operates within aminoacyl-tRNA biosynthesis; selenocysteinyl-tRNA(Sec) biosynthesis; L-seryl-tRNA(Sec) from L-serine and tRNA(Sec): step 1/1. Functionally, catalyzes the attachment of serine to tRNA(Ser). Is also able to aminoacylate tRNA(Sec) with serine, to form the misacylated tRNA L-seryl-tRNA(Sec), which will be further converted into selenocysteinyl-tRNA(Sec). This Geobacter sp. (strain M21) protein is Serine--tRNA ligase.